The following is a 357-amino-acid chain: tRNA N6-adenosine threonylcarbamoyltransferase (357 aa).

Residues histidine 120 and histidine 124 each coordinate Fe cation. Substrate contacts are provided by residues 143 to 147 (LVSGG), aspartate 176, glycine 189, and asparagine 289. A Fe cation-binding site is contributed by aspartate 317.

It belongs to the KAE1 / TsaD family. It depends on Fe(2+) as a cofactor.

Its subcellular location is the cytoplasm. It carries out the reaction L-threonylcarbamoyladenylate + adenosine(37) in tRNA = N(6)-L-threonylcarbamoyladenosine(37) in tRNA + AMP + H(+). Its function is as follows. Required for the formation of a threonylcarbamoyl group on adenosine at position 37 (t(6)A37) in tRNAs that read codons beginning with adenine. Is involved in the transfer of the threonylcarbamoyl moiety of threonylcarbamoyl-AMP (TC-AMP) to the N6 group of A37, together with TsaE and TsaB. TsaD likely plays a direct catalytic role in this reaction. This Polynucleobacter asymbioticus (strain DSM 18221 / CIP 109841 / QLW-P1DMWA-1) (Polynucleobacter necessarius subsp. asymbioticus) protein is tRNA N6-adenosine threonylcarbamoyltransferase.